Reading from the N-terminus, the 811-residue chain is Exocyst complex component 6B (811 aa).

Residues 50 to 119 are a coiled coil; sequence MEKLETRIRN…LVIAMEELKQ (70 aa). A disordered region spans residues 260–280; sequence STSPKSEQDSGILDVEDEEDD.

The protein belongs to the SEC15 family. The exocyst complex is composed of SEC3, SEC5, SEC6, SEC8, SEC10, SEC15, EXO70 and EXO84.

In terms of biological role, component of the exocyst complex involved in the docking of exocytic vesicles with fusion sites on the plasma membrane. This is Exocyst complex component 6B (EXOC6B) from Homo sapiens (Human).